The chain runs to 350 residues: UDP-N-acetylenolpyruvoylglucosamine reductase (350 aa).

Residues 24–195 form the FAD-binding PCMH-type domain; it reads HVDATARWLL…VAVEFNLPLL (172 aa). Arg172 is an active-site residue. Ser245 serves as the catalytic Proton donor. Glu342 is an active-site residue.

It belongs to the MurB family. It depends on FAD as a cofactor.

The protein resides in the cytoplasm. The enzyme catalyses UDP-N-acetyl-alpha-D-muramate + NADP(+) = UDP-N-acetyl-3-O-(1-carboxyvinyl)-alpha-D-glucosamine + NADPH + H(+). It participates in cell wall biogenesis; peptidoglycan biosynthesis. Functionally, cell wall formation. The sequence is that of UDP-N-acetylenolpyruvoylglucosamine reductase from Xanthomonas campestris pv. campestris (strain 8004).